The chain runs to 1066 residues: Thyrotropin-releasing hormone-degrading ectoenzyme (1066 aa).

The span at 1 to 14 shows a compositional bias: basic and acidic residues; the sequence is MALDGERGEQEEEK. Positions 1-43 are disordered; sequence MALDGERGEQEEEKKKKKKKKKRKKKEEEGAEKSSSPFAATMG. The Cytoplasmic portion of the chain corresponds to 1 to 81; the sequence is MALDGERGEQ…ERHIAVHKRL (81 aa). Basic residues predominate over residues 15–25; the sequence is KKKKKKKKRKK. The residue at position 71 (T71) is a Phosphothreonine; by PKC. A helical; Signal-anchor for type II membrane protein membrane pass occupies residues 82–102; the sequence is VLAFAVSIVALLAVTMLAVLL. Topologically, residues 103-1066 are extracellular; that stretch reads SLRFDECGAS…FQWLGKAMRH (964 aa). Positions 117–177 are disordered; it reads GTDGGLGGFP…SEEEQEQWQP (61 aa). Positions 118–127 are enriched in gly residues; sequence TDGGLGGFPE. A glycan (N-linked (GlcNAc...) asparagine) is linked at N131. The span at 143–154 shows a compositional bias: basic and acidic residues; sequence HAGEESSQREIG. N-linked (GlcNAc...) asparagine glycans are attached at residues N202, N217, N264, and N380. 446-450 is a binding site for substrate; that stretch reads AAMEN. H482 serves as a coordination point for Zn(2+). Residue E483 is the Proton acceptor of the active site. Zn(2+) is bound by residues H486 and E505. Residues N647, N676, N691, N705, N726, N842, and N948 are each glycosylated (N-linked (GlcNAc...) asparagine).

It belongs to the peptidase M1 family. Homodimer; disulfide-linked. It depends on Zn(2+) as a cofactor. Predominantly expressed in brain and pituitary. Lower levels in lung and liver.

It localises to the membrane. It carries out the reaction Release of the N-terminal pyroglutamyl group from pGlu-|-His-Xaa tripeptides and pGlu-|-His-Xaa-Gly tetrapeptides.. In terms of biological role, specific inactivation of TRH after its release. The sequence is that of Thyrotropin-releasing hormone-degrading ectoenzyme (Trhde) from Rattus norvegicus (Rat).